The primary structure comprises 279 residues: Inhibitor of growth protein 1 (279 aa).

A disordered region spans residues 115 to 206; that stretch reads AHQDISDGTG…EASPADLPID (92 aa). Lys-135 is covalently cross-linked (Glycyl lysine isopeptide (Lys-Gly) (interchain with G-Cter in SUMO2)). Over residues 154–171 the composition is skewed to basic and acidic residues; it reads RNNENRENASNNHDHDDI. The span at 179 to 191 shows a compositional bias: basic residues; the sequence is KKAKTSKKKKRSK. The PHD-type zinc finger occupies 210 to 259; sequence PTYCLCNQVSYGEMIGCDNDECPIEWFHFSCVGLNHKPKGKWYCPKCRGE. Residues Cys-213, Cys-215, Cys-226, Cys-231, His-237, Cys-240, Cys-253, and Cys-256 each contribute to the Zn(2+) site. The segment at 262 to 279 is PBR; sequence KTMDKALEKSKKERAYNR.

The protein belongs to the ING family. In terms of assembly, interacts with H3K4me3 and to a lesser extent with H3K4me2. Isoform 2 interacts with RSL1D1. As to expression, in the adult, widely expressed with highest levels in thymus and testis.

The protein resides in the nucleus. Isoform 1 inhibits p53-dependent transcriptional activation and may function as an oncoprotein. Isoform 2 acts as a negative growth regulator by cooperating with p53 in transcriptional activation of p53-responsive genes and may act as a tumor suppressor. This Mus musculus (Mouse) protein is Inhibitor of growth protein 1 (Ing1).